The primary structure comprises 372 residues: Transaldolase 2 (372 aa).

Lysine 140 functions as the Schiff-base intermediate with substrate in the catalytic mechanism.

The protein belongs to the transaldolase family. Type 2 subfamily.

It localises to the cytoplasm. The catalysed reaction is D-sedoheptulose 7-phosphate + D-glyceraldehyde 3-phosphate = D-erythrose 4-phosphate + beta-D-fructose 6-phosphate. The protein operates within carbohydrate degradation; pentose phosphate pathway; D-glyceraldehyde 3-phosphate and beta-D-fructose 6-phosphate from D-ribose 5-phosphate and D-xylulose 5-phosphate (non-oxidative stage): step 2/3. Transaldolase is important for the balance of metabolites in the pentose-phosphate pathway. The chain is Transaldolase 2 from Streptomyces avermitilis (strain ATCC 31267 / DSM 46492 / JCM 5070 / NBRC 14893 / NCIMB 12804 / NRRL 8165 / MA-4680).